The sequence spans 384 residues: Putative glutamate--cysteine ligase 2 (384 aa).

It belongs to the glutamate--cysteine ligase type 2 family. YbdK subfamily.

It catalyses the reaction L-cysteine + L-glutamate + ATP = gamma-L-glutamyl-L-cysteine + ADP + phosphate + H(+). Its function is as follows. ATP-dependent carboxylate-amine ligase which exhibits weak glutamate--cysteine ligase activity. This is Putative glutamate--cysteine ligase 2 from Ruegeria pomeroyi (strain ATCC 700808 / DSM 15171 / DSS-3) (Silicibacter pomeroyi).